Consider the following 106-residue polypeptide: PAT complex subunit Asterix (106 aa).

The segment covering 1–10 (MSANSMSDPR) has biased composition (polar residues). The tract at residues 1-29 (MSANSMSDPRSPNKVLRYKPPPSECNPAL) is disordered. N-acetylserine is present on Ser-2. Residues 2–32 (SANSMSDPRSPNKVLRYKPPPSECNPALDDP) lie on the Cytoplasmic side of the membrane. The chain crosses the membrane as a helical span at residues 33-51 (TPDYMNLLGMIFSMCGLML). Lys-52 is a topological domain (lumenal). Residues 53 to 70 (LKWCAWVAVYCSFISFAN) form a helical membrane-spanning segment. Over 71–74 (SRSS) the chain is Cytoplasmic. A helical membrane pass occupies residues 75–95 (EDTKQMMSSFMLSISAVVMSY). Over 96–106 (LQNPQPMTPPW) the chain is Lumenal.

The protein belongs to the Asterix family. Component of the PAT complex, composed of WDR83OS/Asterix and CCDC47. The PAT complex is part of the multi-pass translocon (MPT) complex, composed of three subcomplexes, the GEL complex (composed of RAB5IF/OPTI and TMCO1), the BOS complex (composed of NCLN/Nicalin, NOMO1 and TMEM147) and the PAT complex (composed of WDR83OS/Asterix and CCDC47). The MPT complex associates with the SEC61 complex.

Its subcellular location is the endoplasmic reticulum membrane. Component of the multi-pass translocon (MPT) complex that mediates insertion of multi-pass membrane proteins into the lipid bilayer of membranes. The MPT complex takes over after the SEC61 complex: following membrane insertion of the first few transmembrane segments of proteins by the SEC61 complex, the MPT complex occludes the lateral gate of the SEC61 complex to promote insertion of subsequent transmembrane regions. Within the MPT complex, the PAT subcomplex sequesters any highly polar regions in the transmembrane domains away from the non-polar membrane environment until they can be buried in the interior of the fully assembled protein. Within the PAT subcomplex, WDR83OS/Asterix binds to and redirects the substrate to a location behind the SEC61 complex. The polypeptide is PAT complex subunit Asterix (WDR83OS) (Sus scrofa (Pig)).